Consider the following 161-residue polypeptide: Protein-export protein SecB (161 aa).

Belongs to the SecB family. Homotetramer, a dimer of dimers. One homotetramer interacts with 1 SecA dimer.

The protein localises to the cytoplasm. In terms of biological role, one of the proteins required for the normal export of preproteins out of the cell cytoplasm. It is a molecular chaperone that binds to a subset of precursor proteins, maintaining them in a translocation-competent state. It also specifically binds to its receptor SecA. The protein is Protein-export protein SecB of Coxiella burnetii (strain CbuG_Q212) (Coxiella burnetii (strain Q212)).